A 201-amino-acid polypeptide reads, in one-letter code: LexA repressor 1 (201 aa).

Residues 27–47 (LAEIAQAFGFASRNAAQKHVQ) constitute a DNA-binding region (H-T-H motif). Catalysis depends on for autocatalytic cleavage activity residues S122 and K159.

This sequence belongs to the peptidase S24 family. Homodimer.

The enzyme catalyses Hydrolysis of Ala-|-Gly bond in repressor LexA.. Represses a number of genes involved in the response to DNA damage (SOS response), including recA and lexA. In the presence of single-stranded DNA, RecA interacts with LexA causing an autocatalytic cleavage which disrupts the DNA-binding part of LexA, leading to derepression of the SOS regulon and eventually DNA repair. This Xanthomonas oryzae pv. oryzae (strain KACC10331 / KXO85) protein is LexA repressor 1.